The following is a 460-amino-acid chain: tRNA modification GTPase MnmE (460 aa).

(6S)-5-formyl-5,6,7,8-tetrahydrofolate contacts are provided by Arg29, Glu91, and Lys132. Positions 227 to 383 constitute a TrmE-type G domain; that stretch reads GISIALIGKT…LIDTIIKKCG (157 aa). Asn237 lines the K(+) pocket. GTP is bound by residues 237 to 242, 256 to 262, and 281 to 284; these read NVGKSS, TNIPGTT, and DTAG. Ser241 provides a ligand contact to Mg(2+). The K(+) site is built by Thr256, Ile258, and Thr261. Residue Thr262 coordinates Mg(2+). Residue Lys460 coordinates (6S)-5-formyl-5,6,7,8-tetrahydrofolate.

It belongs to the TRAFAC class TrmE-Era-EngA-EngB-Septin-like GTPase superfamily. TrmE GTPase family. In terms of assembly, homodimer. Heterotetramer of two MnmE and two MnmG subunits. K(+) is required as a cofactor.

Its subcellular location is the cytoplasm. Its function is as follows. Exhibits a very high intrinsic GTPase hydrolysis rate. Involved in the addition of a carboxymethylaminomethyl (cmnm) group at the wobble position (U34) of certain tRNAs, forming tRNA-cmnm(5)s(2)U34. The sequence is that of tRNA modification GTPase MnmE from Prochlorococcus marinus (strain AS9601).